Here is a 303-residue protein sequence, read N- to C-terminus: Dihydroorotate dehydrogenase B (NAD(+)), catalytic subunit (303 aa).

FMN is bound by residues Ser21 and 45–46; that span reads KG. Substrate contacts are provided by residues Lys45 and 69–73; that span reads NAVGL. Asn99 and Asn127 together coordinate FMN. Asn127 serves as a coordination point for substrate. Residue Cys130 is the Nucleophile of the active site. Residues Lys165 and Ile191 each coordinate FMN. Residue 192–193 coordinates substrate; it reads NT. FMN contacts are provided by residues Gly217, 243 to 244, and 265 to 266; these read GG and GT.

Belongs to the dihydroorotate dehydrogenase family. Type 1 subfamily. As to quaternary structure, heterotetramer of 2 PyrK and 2 PyrD type B subunits. The cofactor is FMN.

It localises to the cytoplasm. The catalysed reaction is (S)-dihydroorotate + NAD(+) = orotate + NADH + H(+). Its pathway is pyrimidine metabolism; UMP biosynthesis via de novo pathway; orotate from (S)-dihydroorotate (NAD(+) route): step 1/1. Catalyzes the conversion of dihydroorotate to orotate with NAD(+) as electron acceptor. This is Dihydroorotate dehydrogenase B (NAD(+)), catalytic subunit (pyrD) from Phocaeicola vulgatus (strain ATCC 8482 / DSM 1447 / JCM 5826 / CCUG 4940 / NBRC 14291 / NCTC 11154) (Bacteroides vulgatus).